A 921-amino-acid polypeptide reads, in one-letter code: Translation initiation factor IF-2 (921 aa).

The disordered stretch occupies residues 1–296 (MADQNTPGDK…PGPQKQRGRL (296 aa)). The span at 80–89 (RPSGPRPSGG) shows a compositional bias: low complexity. The segment covering 117–183 (ARVRDLEERR…AKKRFGEGEA (67 aa)) has biased composition (basic and acidic residues). 2 stretches are compositionally biased toward low complexity: residues 184–237 (PRPA…ARPA) and 248–257 (GRAPAAVAAG). One can recognise a tr-type G domain in the interval 417–586 (PRSPVVTVMG…MIALQADILD (170 aa)). The tract at residues 426 to 433 (GHVDHGKT) is G1. Position 426–433 (426–433 (GHVDHGKT)) interacts with GTP. The interval 451–455 (GITQH) is G2. Positions 474–477 (DTPG) are G3. GTP-binding positions include 474–478 (DTPGH) and 528–531 (NKID). A G4 region spans residues 528 to 531 (NKID). The segment at 564-566 (SAK) is G5.

It belongs to the TRAFAC class translation factor GTPase superfamily. Classic translation factor GTPase family. IF-2 subfamily.

Its subcellular location is the cytoplasm. One of the essential components for the initiation of protein synthesis. Protects formylmethionyl-tRNA from spontaneous hydrolysis and promotes its binding to the 30S ribosomal subunits. Also involved in the hydrolysis of GTP during the formation of the 70S ribosomal complex. This chain is Translation initiation factor IF-2, found in Bradyrhizobium sp. (strain ORS 278).